A 443-amino-acid polypeptide reads, in one-letter code: Trigger factor (443 aa).

The region spanning 163–248 is the PPIase FKBP-type domain; sequence GDTAVIDFEG…INEIKAKELP (86 aa).

Belongs to the FKBP-type PPIase family. Tig subfamily.

It is found in the cytoplasm. The enzyme catalyses [protein]-peptidylproline (omega=180) = [protein]-peptidylproline (omega=0). Functionally, involved in protein export. Acts as a chaperone by maintaining the newly synthesized protein in an open conformation. Functions as a peptidyl-prolyl cis-trans isomerase. In Agathobacter rectalis (strain ATCC 33656 / DSM 3377 / JCM 17463 / KCTC 5835 / VPI 0990) (Eubacterium rectale), this protein is Trigger factor.